Reading from the N-terminus, the 503-residue chain is Glycerol kinase (503 aa).

Position 14 (Thr14) interacts with ADP. Residues Thr14, Thr15, and Ser16 each contribute to the ATP site. Thr14 serves as a coordination point for sn-glycerol 3-phosphate. Arg18 serves as a coordination point for ADP. 4 residues coordinate sn-glycerol 3-phosphate: Arg84, Glu85, Tyr136, and Asp246. The glycerol site is built by Arg84, Glu85, Tyr136, Asp246, and Gln247. Residues Thr268 and Gly311 each contribute to the ADP site. ATP contacts are provided by Thr268, Gly311, Gln315, and Gly412. Positions 412 and 416 each coordinate ADP.

Belongs to the FGGY kinase family. As to quaternary structure, homotetramer and homodimer (in equilibrium). Heterodimer with EIIA-Glc. Binds 1 zinc ion per glycerol kinase EIIA-Glc dimer. The zinc ion is important for dimerization.

It carries out the reaction glycerol + ATP = sn-glycerol 3-phosphate + ADP + H(+). It functions in the pathway polyol metabolism; glycerol degradation via glycerol kinase pathway; sn-glycerol 3-phosphate from glycerol: step 1/1. With respect to regulation, activity of this regulatory enzyme is affected by several metabolites. Allosterically and non-competitively inhibited by fructose 1,6-bisphosphate (FBP) and unphosphorylated phosphocarrier protein EIIA-Glc (III-Glc), an integral component of the bacterial phosphotransferase (PTS) system. Key enzyme in the regulation of glycerol uptake and metabolism. Catalyzes the phosphorylation of glycerol to yield sn-glycerol 3-phosphate. The polypeptide is Glycerol kinase (Klebsiella pneumoniae subsp. pneumoniae (strain ATCC 700721 / MGH 78578)).